The sequence spans 72 residues: Large ribosomal subunit protein bL31 (72 aa).

This sequence belongs to the bacterial ribosomal protein bL31 family. Type A subfamily. As to quaternary structure, part of the 50S ribosomal subunit.

Functionally, binds the 23S rRNA. This chain is Large ribosomal subunit protein bL31, found in Prosthecochloris aestuarii (strain DSM 271 / SK 413).